The following is a 494-amino-acid chain: Tripartite motif-containing protein 5 (494 aa).

Ala-2 is modified (N-acetylalanine). The segment at 15-59 adopts an RING-type zinc-finger fold; it reads CPICLELLTEPLSLDCGHSFCQACITANHKESTPHQGERSCPLCR. A Phosphoserine modification is found at Ser-86. The segment at 91 to 132 adopts a B box-type zinc-finger fold; sequence QKVGHCARHGEKLLLFCEQDGNVICWLCERSQEHRGHHTLLV. Zn(2+)-binding residues include Cys-96, His-99, Cys-118, and His-124. Positions 131 to 223 form a coiled coil; sequence LVEEVAEKYQ…RLVQSESDMV (93 aa). The interval 186–199 is required for interaction with GABARAP and for autophagy; the sequence is FKQLRDILDCEESK. One can recognise a B30.2/SPRY domain in the interval 280–494; it reads PDLKAMLQAF…LPMTLCSPSS (215 aa).

It belongs to the TRIM/RBCC family. In terms of assembly, can form homodimers and homotrimers. In addition to lower-order dimerization, also exhibits a higher-order multimerization and both low- and high-order multimerizations are essential for its restriction activity. Interacts with BTBD1 and BTBD2. Interacts with PSMC4, PSMC5, PSMD7 and HSPA8/HSC70. Interacts (via B30.2/SPRY domain) with HSPA1A/B. Interacts with PSMC2, MAP3K7/TAK1, TAB2 and TAB3. Interacts with SQSTM1. Interacts with TRIM6 and TRIM34. Interacts with ULK1 (phosphorylated form), GABARAP, GABARAPL1, GABARAPL2, MAP1LC3A, MAP1LC3C and BECN1. In terms of processing, degraded in a proteasome-independent fashion in the absence of viral infection but in a proteasome-dependent fashion following exposure to restriction sensitive virus. Autoubiquitinated in a RING finger- and UBE2D2-dependent manner. Monoubiquitinated by TRIM21. Deubiquitinated by Yersinia YopJ. Ubiquitination may not lead to proteasomal degradation.

It localises to the cytoplasm. Its subcellular location is the nucleus. It catalyses the reaction S-ubiquitinyl-[E2 ubiquitin-conjugating enzyme]-L-cysteine + [acceptor protein]-L-lysine = [E2 ubiquitin-conjugating enzyme]-L-cysteine + N(6)-ubiquitinyl-[acceptor protein]-L-lysine.. It functions in the pathway protein modification; protein ubiquitination. Capsid-specific restriction factor that prevents infection from non-host-adapted retroviruses. Blocks viral replication early in the life cycle, after viral entry but before reverse transcription. In addition to acting as a capsid-specific restriction factor, also acts as a pattern recognition receptor that activates innate immune signaling in response to the retroviral capsid lattice. Binding to the viral capsid triggers its E3 ubiquitin ligase activity, and in concert with the heterodimeric ubiquitin conjugating enzyme complex UBE2V1-UBE2N (also known as UBC13-UEV1A complex) generates 'Lys-63'-linked polyubiquitin chains, which in turn are catalysts in the autophosphorylation of the MAP3K7/TAK1 complex (includes TAK1, TAB2, and TAB3). Activation of the MAP3K7/TAK1 complex by autophosphorylation results in the induction and expression of NF-kappa-B and MAPK-responsive inflammatory genes, thereby leading to an innate immune response in the infected cell. Plays a role in regulating autophagy through activation of autophagy regulator BECN1 by causing its dissociation from its inhibitors BCL2 and TAB2. This chain is Tripartite motif-containing protein 5 (TRIM5), found in Saguinus labiatus (Red-chested mustached tamarin).